The following is a 415-amino-acid chain: Serine hydroxymethyltransferase (415 aa).

Residues leucine 117 and 121-123 (GHL) contribute to the (6S)-5,6,7,8-tetrahydrofolate site. Lysine 226 carries the post-translational modification N6-(pyridoxal phosphate)lysine. Position 241 (glutamate 241) interacts with (6S)-5,6,7,8-tetrahydrofolate.

Belongs to the SHMT family. In terms of assembly, homodimer. Pyridoxal 5'-phosphate serves as cofactor.

The protein resides in the cytoplasm. It carries out the reaction (6R)-5,10-methylene-5,6,7,8-tetrahydrofolate + glycine + H2O = (6S)-5,6,7,8-tetrahydrofolate + L-serine. The protein operates within one-carbon metabolism; tetrahydrofolate interconversion. It functions in the pathway amino-acid biosynthesis; glycine biosynthesis; glycine from L-serine: step 1/1. Functionally, catalyzes the reversible interconversion of serine and glycine with tetrahydrofolate (THF) serving as the one-carbon carrier. This reaction serves as the major source of one-carbon groups required for the biosynthesis of purines, thymidylate, methionine, and other important biomolecules. Also exhibits THF-independent aldolase activity toward beta-hydroxyamino acids, producing glycine and aldehydes, via a retro-aldol mechanism. The protein is Serine hydroxymethyltransferase of Bacillus licheniformis (strain ATCC 14580 / DSM 13 / JCM 2505 / CCUG 7422 / NBRC 12200 / NCIMB 9375 / NCTC 10341 / NRRL NRS-1264 / Gibson 46).